Here is a 309-residue protein sequence, read N- to C-terminus: Acetolactate synthase small subunit, mitochondrial (309 aa).

Residues M1–C24 constitute a mitochondrion transit peptide. One can recognise an ACT domain in the interval V79 to R159.

It belongs to the acetolactate synthase small subunit family. In terms of assembly, the acetolactate synthase complex contains the catalytic regulatory subunit ILV2 and the regulatory small subunit ILV6.

The protein localises to the mitochondrion. The protein operates within amino-acid biosynthesis; L-isoleucine biosynthesis; L-isoleucine from 2-oxobutanoate: step 1/4. Its pathway is amino-acid biosynthesis; L-valine biosynthesis; L-valine from pyruvate: step 1/4. Its function is as follows. Regulatory subunit of mitochondrial acetolactate synthase, which catalyzes the first of a series of common steps in the biosynthesis of the branched-chain amino acids. Stimulates activity of the acetolactate synthase catalytic subunit ILV2 seven- to tenfold and confers sensitivity to inhibition by valine and activation by ATP. This is Acetolactate synthase small subunit, mitochondrial (ILV6) from Saccharomyces cerevisiae (strain ATCC 204508 / S288c) (Baker's yeast).